We begin with the raw amino-acid sequence, 568 residues long: 3-(3-hydroxy-phenyl)propionate/3-hydroxycinnamic acid hydroxylase (568 aa).

FAD is bound by residues 13-42 (DVVIVGAGPVGLTLANILGLQGVRTMIVEE) and 278-288 (FRKGRMFLAGD).

It belongs to the PheA/TfdB FAD monooxygenase family. The cofactor is FAD.

It carries out the reaction 3-(3-hydroxyphenyl)propanoate + NADH + O2 + H(+) = 3-(2,3-dihydroxyphenyl)propanoate + NAD(+) + H2O. It catalyses the reaction (2E)-3-(3-hydroxyphenyl)prop-2-enoate + NADH + O2 + H(+) = (2E)-3-(2,3-dihydroxyphenyl)prop-2-enoate + NAD(+) + H2O. Its pathway is aromatic compound metabolism; 3-phenylpropanoate degradation. Functionally, catalyzes the insertion of one atom of molecular oxygen into position 2 of the phenyl ring of 3-(3-hydroxyphenyl)propionate (3-HPP) and hydroxycinnamic acid (3HCI). This is 3-(3-hydroxy-phenyl)propionate/3-hydroxycinnamic acid hydroxylase from Mycobacterium sp. (strain JLS).